The sequence spans 131 residues: MKLHLLKSKIHNARVTSGDLEYEGSITIDQELLLLAEMIPNEKVLVVNNNNGERFETYIINGEPGSRVIQLNGAAARCALPGDEIIIMTFAVMDEKKARTFQPMVLIVDHLNNPKRRHRIGQEDEQLSSSI.

The Schiff-base intermediate with substrate; via pyruvic acid role is filled by S25. Residue S25 is modified to Pyruvic acid (Ser). T57 lines the substrate pocket. Residue Y58 is the Proton donor of the active site. 73–75 lines the substrate pocket; sequence GAA.

Belongs to the PanD family. As to quaternary structure, heterooctamer of four alpha and four beta subunits. Pyruvate serves as cofactor. In terms of processing, is synthesized initially as an inactive proenzyme, which is activated by self-cleavage at a specific serine bond to produce a beta-subunit with a hydroxyl group at its C-terminus and an alpha-subunit with a pyruvoyl group at its N-terminus.

The protein localises to the cytoplasm. The enzyme catalyses L-aspartate + H(+) = beta-alanine + CO2. It functions in the pathway cofactor biosynthesis; (R)-pantothenate biosynthesis; beta-alanine from L-aspartate: step 1/1. Its function is as follows. Catalyzes the pyruvoyl-dependent decarboxylation of aspartate to produce beta-alanine. The protein is Aspartate 1-decarboxylase of Chlorobium phaeobacteroides (strain DSM 266 / SMG 266 / 2430).